Here is a 409-residue protein sequence, read N- to C-terminus: Elongation factor 1-gamma (409 aa).

Residues 2–81 (SVGTVYGKIG…YLASLNKTRA (80 aa)) enclose the GST N-terminal domain. The 127-residue stretch at 86–212 (TAEEKAKVLQ…EPLKFIDQPL (127 aa)) folds into the GST C-terminal domain. The segment covering 219–248 (NKEAAPAKKAEKKKDEKKKNAPKPQAERPA) has biased composition (basic and acidic residues). The segment at 219 to 261 (NKEAAPAKKAEKKKDEKKKNAPKPQAERPAKPPKHPLASAPNG) is disordered. The EF-1-gamma C-terminal domain occupies 251–409 (PKHPLASAPN…REVADGKVCK (159 aa)).

In terms of assembly, EF-1 is composed of four subunits: alpha, beta, delta, and gamma.

Its function is as follows. Probably plays a role in anchoring the complex to other cellular components. This Schizosaccharomyces pombe (strain 972 / ATCC 24843) (Fission yeast) protein is Elongation factor 1-gamma (tef3).